Here is a 383-residue protein sequence, read N- to C-terminus: Homoserine O-succinyltransferase (383 aa).

One can recognise an AB hydrolase-1 domain in the interval 51 to 361 (NALLICHALS…ESDFGHDAFL (311 aa)). Residue Ser-157 is the Nucleophile of the active site. Arg-227 contacts substrate. Residues Asp-324 and His-357 contribute to the active site. Substrate is bound at residue Asp-358.

It belongs to the AB hydrolase superfamily. MetX family. In terms of assembly, homodimer.

The protein localises to the cytoplasm. It carries out the reaction L-homoserine + succinyl-CoA = O-succinyl-L-homoserine + CoA. The protein operates within amino-acid biosynthesis; L-methionine biosynthesis via de novo pathway; O-succinyl-L-homoserine from L-homoserine: step 1/1. Transfers a succinyl group from succinyl-CoA to L-homoserine, forming succinyl-L-homoserine. In Teredinibacter turnerae (strain ATCC 39867 / T7901), this protein is Homoserine O-succinyltransferase.